The primary structure comprises 161 residues: MGRAWKFGDDIDTDVIIQGKYLVINEPEELAKHVFENLRPEFAKEVKKGDFVVAGENFGCGSSREHAPLALKATGIEAVIAKSYARIFFRNAINIGLRVLECKETDKIEDGDELEVDYEKGVIYNKTKGEEYPINPLPDFLKEILEKGGLVEFAKSLRERA.

It belongs to the LeuD family. LeuD type 2 subfamily. Heterodimer of LeuC and LeuD.

It catalyses the reaction (2R,3S)-3-isopropylmalate = (2S)-2-isopropylmalate. Its pathway is amino-acid biosynthesis; L-leucine biosynthesis; L-leucine from 3-methyl-2-oxobutanoate: step 2/4. In terms of biological role, catalyzes the isomerization between 2-isopropylmalate and 3-isopropylmalate, via the formation of 2-isopropylmaleate. The sequence is that of 3-isopropylmalate dehydratase small subunit 1 (leuD1) from Archaeoglobus fulgidus (strain ATCC 49558 / DSM 4304 / JCM 9628 / NBRC 100126 / VC-16).